The primary structure comprises 159 residues: Capsid protein (159 aa).

Ser-2 is subject to N-acetylserine; by host.

This sequence belongs to the virgaviridae capsid protein family.

It is found in the virion. Its function is as follows. Capsid protein self-assembles to form rod-shaped virions about 18 nm in diameter with a central canal enclosing the viral genomic RNA. The sequence is that of Capsid protein (CP) from Tobacco mosaic virus (strain Rakkyo) (TMV-R).